A 265-amino-acid polypeptide reads, in one-letter code: Insulin-like growth factor-binding protein 2-B (265 aa).

A signal peptide spans 1–17; that stretch reads MSLALLCSLLLVHGSLG. Positions 19-99 constitute an IGFBP N-terminal domain; the sequence is IVFRCPSCTA…IQGLGRCENK (81 aa). 6 cysteine pairs are disulfide-bonded: C23–C49, C26–C51, C34–C52, C41–C55, C63–C76, and C70–C96. Over residues 107 to 122 the composition is skewed to polar residues; the sequence is TNQESAAHSGEVNGTR. Disordered stretches follow at residues 107-128 and 144-170; these read TNQESAAHSGEVNGTRSPPMKK and HHNNKRTRMYNTQDDPKTPHPKQSQCQ. In terms of domain architecture, Thyroglobulin type-1 spans 166–248; the sequence is QSQCQQELDK…SDKVRGDPNC (83 aa). Disulfide bonds link C169/C203, C214/C225, and C227/C248. Residues 238-265 are disordered; the sequence is SSDKVRGDPNCSQYYGGPELEPPTAQQK. The Cell attachment site motif lies at 243 to 245; sequence RGD.

Interacts with igf2. Interacts with igf1. In early embryos, expressed at a low level in most tissues with expression becoming abundant in the liver by 96 hours post-fertilization (hpf). The expression pattern in adults exhibits sexual dimorphism; in adult males expression is limited exclusively to the liver whereas in adult females expression is observed in the liver and other tissues including the gut, kidney, ovary and muscle.

It is found in the secreted. Functionally, IGF-binding proteins prolong the half-life of the IGFs and have been shown to either inhibit or stimulate the growth promoting effects of the IGFs on cell culture. They alter the interaction of IGFs with their cell surface receptors. The sequence is that of Insulin-like growth factor-binding protein 2-B from Danio rerio (Zebrafish).